A 330-amino-acid polypeptide reads, in one-letter code: MSIIVTGAAGFIGSNLLQALNRRGETDIIAVDDLTDGEQFRNLADADIADYLDQNDFLERYARGDFGTVRALFHQGACASTLESNGRYMMENNYRYSCRLLESSLELGVPFLYASSAAVYGAGRTFREARQYERPLNVYGYSKFLFDQRVRRALPQARSQVVGLRYFNVYGPREEHKGRMASVAYHCYQQLRRDGRVELFGEHGGFPPGGHLRDFVAVEDVARVNLHFFDHPQRSGIFNLGSGQARTFNEVALAVINSVRANADQPPLSLQQAVESGLLGYREFPESLRARYQSHTCADLELLREAGYRDDFQSLEEGVAGYCRWLARSA.

NADP(+) is bound by residues 11 to 12 (FI), 32 to 33 (DD), Gln39, Gln54, 75 to 79 (QGACA), and Asn92. The Proton acceptor role is filled by Tyr139. Residue Lys143 coordinates NADP(+). Asn168 provides a ligand contact to substrate. 2 residues coordinate NADP(+): Val169 and Lys177. Catalysis depends on Lys177, which acts as the Proton acceptor. Residues Arg179, His186, 200–203 (FGEH), Arg213, and Tyr292 contribute to the substrate site.

The protein belongs to the NAD(P)-dependent epimerase/dehydratase family. HldD subfamily. As to quaternary structure, homopentamer. It depends on NADP(+) as a cofactor.

The catalysed reaction is ADP-D-glycero-beta-D-manno-heptose = ADP-L-glycero-beta-D-manno-heptose. Its pathway is nucleotide-sugar biosynthesis; ADP-L-glycero-beta-D-manno-heptose biosynthesis; ADP-L-glycero-beta-D-manno-heptose from D-glycero-beta-D-manno-heptose 7-phosphate: step 4/4. Functionally, catalyzes the interconversion between ADP-D-glycero-beta-D-manno-heptose and ADP-L-glycero-beta-D-manno-heptose via an epimerization at carbon 6 of the heptose. This chain is ADP-L-glycero-D-manno-heptose-6-epimerase, found in Pseudomonas aeruginosa (strain UCBPP-PA14).